A 444-amino-acid polypeptide reads, in one-letter code: Nuclear distribution protein nudF (444 aa).

The LisH domain occupies 9 to 41 (QAEALHKAMLAYLSVINAPQTAETLREELHFDE). A coiled-coil region spans residues 60–88 (TGIARLQRRINDLEAEVRSLQAELEASPS). The segment at 83–107 (LEASPSAARAKNQDPTNWLPKPSST) is disordered. WD repeat units lie at residues 112-153 (SHRD…RTLK), 155-195 (HIRG…ANIR), 199-239 (GHDH…CVKV), 243-282 (ATES…PKAA), 285-345 (GHEN…IKTL), 347-386 (GHDN…RLVK), and 391-437 (AHEH…GCAD).

This sequence belongs to the WD repeat LIS1/nudF family. In terms of assembly, interacts with dynein. Self-associates. Interacts with bnfA, nudC and nudE.

The protein localises to the cytoplasm. It is found in the cytoskeleton. The protein resides in the spindle pole. In terms of biological role, positively regulates the activity of the minus-end directed microtubule motor protein dynein. May enhance dynein-mediated microtubule sliding by targeting dynein to the microtubule plus end. Required for nuclear migration during vegetative growth as well as development. Required for retrograde early endosome (EE) transport from the hyphal tip. Required for localization of dynein to the mitotic spindle poles. Recruits additional proteins to the dynein complex at SPBs. This is Nuclear distribution protein nudF from Emericella nidulans (strain FGSC A4 / ATCC 38163 / CBS 112.46 / NRRL 194 / M139) (Aspergillus nidulans).